We begin with the raw amino-acid sequence, 471 residues long: N(6)-adenine-specific methyltransferase METTL4 (471 aa).

Belongs to the MT-A70-like family.

Its subcellular location is the nucleus. The enzyme catalyses a 2'-O-methyladenosine in U2 snRNA + S-adenosyl-L-methionine = an N(6)-methyl-2'-O-methyladenosine in U2 snRNA + S-adenosyl-L-homocysteine + H(+). The catalysed reaction is a 2'-deoxyadenosine in DNA + S-adenosyl-L-methionine = an N(6)-methyl-2'-deoxyadenosine in DNA + S-adenosyl-L-homocysteine + H(+). N(6)-adenine-specific methyltransferase that can methylate both RNAs and DNA. Acts as a N(6)-adenine-specific RNA methyltransferase by catalyzing formation of N6,2'-O-dimethyladenosine (m6A(m)) on internal positions of U2 small nuclear RNA (snRNA): methylates the 6th position of adenine residues with a pre-deposited 2'-O-methylation. Internal m6A(m) methylation of snRNAs regulates RNA splicing. Also able to act as a N(6)-adenine-specific DNA methyltransferase by mediating methylation of DNA on the 6th position of adenine (N(6)-methyladenosine). The existence of N(6)-methyladenosine (m6A) on DNA is however unclear in mammals, and additional evidences are required to confirm the role of the N(6)-adenine-specific DNA methyltransferase activity of METTL4 in vivo. Acts as a regulator of mitochondrial transcript levels and mitochondrial DNA (mtDNA) copy number by mediating mtDNA N(6)-methylation: m6A on mtDNA reduces transcription by repressing TFAM DNA-binding and bending. N(6)-methyladenosine deposition by METTL4 regulates Polycomb silencing by triggering ubiquitination and degradation of sensor proteins ASXL1 and MPND, leading to inactivation of the PR-DUB complex and subsequent preservation of Polycomb silencing. The polypeptide is N(6)-adenine-specific methyltransferase METTL4 (Mus musculus (Mouse)).